The sequence spans 339 residues: D-erythrose-4-phosphate dehydrogenase (339 aa).

Position 12-13 (12-13 (RI)) interacts with NAD(+). Residues 154–156 (SCT), arginine 200, 213–214 (TK), and arginine 236 each bind substrate. The Nucleophile role is filled by cysteine 155. Position 318 (asparagine 318) interacts with NAD(+).

Belongs to the glyceraldehyde-3-phosphate dehydrogenase family. Epd subfamily. Homotetramer.

Its subcellular location is the cytoplasm. The catalysed reaction is D-erythrose 4-phosphate + NAD(+) + H2O = 4-phospho-D-erythronate + NADH + 2 H(+). Its pathway is cofactor biosynthesis; pyridoxine 5'-phosphate biosynthesis; pyridoxine 5'-phosphate from D-erythrose 4-phosphate: step 1/5. Its function is as follows. Catalyzes the NAD-dependent conversion of D-erythrose 4-phosphate to 4-phosphoerythronate. The protein is D-erythrose-4-phosphate dehydrogenase of Enterobacter sp. (strain 638).